The sequence spans 884 residues: Probable ribonuclease ZC3H12C (884 aa).

The disordered stretch occupies residues 66–108 (KPTMDTVNSGKEGKGVSEENVSSGDSEGSTSSDHESEQLSSLS). A compositionally biased stretch (low complexity) spans 87-96 (SSGDSEGSTS). At Ser231 the chain carries Phosphoserine. The RNase NYN domain occupies 246 to 401 (LRPVVIDGSN…LGRHGPSLDN (156 aa)). The C3H1-type zinc-finger motif lies at 411-436 (EHKKQPCPYGKKCTYGHKCKYYHPER). Positions 456-478 (AAKTTNEGGLVKSNSVPCSTKAD) are enriched in polar residues. Disordered regions lie at residues 456 to 548 (AAKT…SGVH), 716 to 739 (VGAR…KAPH), and 755 to 776 (SRLY…EGLG). Positions 500-516 (VYQDIEEKLPTKNKLET) are enriched in basic and acidic residues. The span at 518–543 (SVPSLVSIPATSTAKPQSTTPLSNGL) shows a compositional bias: polar residues.

This sequence belongs to the ZC3H12 family. It depends on Mg(2+) as a cofactor.

Its function is as follows. May function as RNase and regulate the levels of target RNA species. The sequence is that of Probable ribonuclease ZC3H12C (Zc3h12c) from Mus musculus (Mouse).